Consider the following 568-residue polypeptide: Lipoprotein LpqB (568 aa).

The first 23 residues, 1-23, serve as a signal peptide directing secretion; it reads MSKISTKLKALSAVLSVTTLVAG. The N-palmitoyl cysteine moiety is linked to residue cysteine 24. Residue cysteine 24 is the site of S-diacylglycerol cysteine attachment.

It belongs to the LpqB lipoprotein family.

The protein localises to the cell membrane. This is Lipoprotein LpqB from Corynebacterium glutamicum (strain R).